The following is a 561-amino-acid chain: Cytosolic purine 5'-nucleotidase (561 aa).

The active-site Nucleophile is Asp52. 2 residues coordinate GMP: Asp52 and Asp54. IMP-binding residues include Asp52 and Asp54. Mg(2+) contacts are provided by Asp52 and Asp54. Asp54 acts as the Proton donor in catalysis. Arg144 contacts (2R)-2,3-bisphosphoglycerate. Residues Arg144 and Asn154 each contribute to the ATP site. Positions 144 and 154 each coordinate dATP. Asn154 serves as a coordination point for adenosine. Residue Asn154 participates in P(1),P(4)-bis(5'-adenosyl) tetraphosphate binding. GMP contacts are provided by Arg202, Asp206, Lys215, Thr249, and Asn250. IMP contacts are provided by Arg202, Asp206, Lys215, Thr249, Asn250, Ser251, and Lys292. Residue Lys292 coordinates GMP. Asp351 lines the Mg(2+) pocket. Lys362 is a binding site for (2R)-2,3-bisphosphoglycerate. Lys362 contributes to the P(1),P(4)-bis(5'-adenosyl) tetraphosphate binding site. Position 418 is a phosphoserine (Ser418). Residues Met436 and Gln453 each contribute to the adenosine site. ATP is bound by residues Gln453 and Arg456. DATP contacts are provided by Gln453 and Arg456. Residue Gln453 participates in P(1),P(4)-bis(5'-adenosyl) tetraphosphate binding. Tyr457 contacts (2R)-2,3-bisphosphoglycerate. Residue Tyr457 coordinates P(1),P(4)-bis(5'-adenosyl) tetraphosphate. Phosphoserine is present on residues Ser502, Ser511, and Ser527. The disordered stretch occupies residues 538 to 561 (PLAPQEITHCHDEDDDEEEEEEEE). Residues 548–561 (HDEDDDEEEEEEEE) are required for tetramer assembly. Residues 550 to 561 (EDDDEEEEEEEE) are compositionally biased toward acidic residues.

It belongs to the 5'(3')-deoxyribonucleotidase family. Homotetramer. Requires Mg(2+) as cofactor. In terms of tissue distribution, widely expressed.

It is found in the cytoplasm. It localises to the cytosol. It catalyses the reaction a ribonucleoside 5'-phosphate + H2O = a ribonucleoside + phosphate. It carries out the reaction a 2'-deoxyribonucleoside + a ribonucleoside 5'-phosphate = a ribonucleoside + a 2'-deoxyribonucleoside 5'-phosphate. The enzyme catalyses IMP + H2O = inosine + phosphate. The catalysed reaction is GMP + H2O = guanosine + phosphate. It catalyses the reaction dIMP + H2O = 2'-deoxyinosine + phosphate. It carries out the reaction dGMP + H2O = 2'-deoxyguanosine + phosphate. The enzyme catalyses XMP + H2O = xanthosine + phosphate. The catalysed reaction is inosine + GMP = guanosine + IMP. It catalyses the reaction dGMP + inosine = 2'-deoxyguanosine + IMP. It carries out the reaction dIMP + inosine = 2'-deoxyinosine + IMP. The enzyme catalyses inosine + UMP = uridine + IMP. The catalysed reaction is inosine + CMP = cytidine + IMP. It catalyses the reaction inosine + AMP = IMP + adenosine. Allosterically activated by various compounds including ATP, 2,3-BPG/2,3-Bisphosphoglyceric acid and Ap4A/P1,P4-bis(5'-adenosyl) tetraphosphate. Binding of an allosteric activator is a prerequisiste to magnesium and substrate binding. Inhibited by inorganic phosphate. In terms of biological role, broad specificity cytosolic 5'-nucleotidase that catalyzes the dephosphorylation of 6-hydroxypurine nucleoside 5'-monophosphates. In addition, possesses a phosphotransferase activity by which it can transfer a phosphate from a donor nucleoside monophosphate to an acceptor nucleoside, preferably inosine, deoxyinosine and guanosine. Has the highest activities for IMP and GMP followed by dIMP, dGMP and XMP. Could also catalyze the transfer of phosphates from pyrimidine monophosphates but with lower efficiency. Through these activities regulates the purine nucleoside/nucleotide pools within the cell. This is Cytosolic purine 5'-nucleotidase from Homo sapiens (Human).